A 262-amino-acid chain; its full sequence is Putative outer membrane protein CPn_1034/CP_0818/CPj1034/CpB1074 (262 aa).

An N-terminal signal peptide occupies residues 1-17 (MKTWLFFTFLFSCSSFY).

The protein localises to the cell outer membrane. The sequence is that of Putative outer membrane protein CPn_1034/CP_0818/CPj1034/CpB1074 from Chlamydia pneumoniae (Chlamydophila pneumoniae).